The chain runs to 359 residues: Very-long-chain (3R)-3-hydroxyacyl-CoA dehydratase (359 aa).

Over 1-144 the chain is Cytoplasmic; the sequence is MSALTPHVYW…RKDPFLGLKK (144 aa). In terms of domain architecture, CS spans 3 to 92; that stretch reads ALTPHVYWAQ…QEEVWWNRLT (90 aa). A coiled-coil region spans residues 109–133; it reads LDESDAEMELREKEEKINKVSFESR. Residues 145–165 traverse the membrane as a helical segment; sequence GFLFMYNLVQFLGYSWIFVNM. The Lumenal portion of the chain corresponds to 166 to 186; the sequence is TVRLFILGQDSFYDTFHTIAD. Residues 187-207 traverse the membrane as a helical segment; it reads VMYFCQMLAIMEVINPAVGLV. The Cytoplasmic portion of the chain corresponds to 208 to 209; that stretch reads KT. Residues 210–230 form a helical membrane-spanning segment; the sequence is GVMPAFIQVMGRNFILFVIFG. Over 231 to 239 the chain is Lumenal; sequence SLEDMQNKP. Residues 240–260 traverse the membrane as a helical segment; the sequence is VVFFVFYLWSTIEIFRYPFYM. The Cytoplasmic segment spans residues 261–277; the sequence is LACIDTEWKLLTWLRYT. The chain crosses the membrane as a helical span at residues 278-298; sequence IWMPLYPLGVLAEAVAVIQSI. Active-site residues include tyrosine 283 and glutamate 290. At 299–317 the chain is on the lumenal side; it reads PIFDETKLLSIPLPKATGL. Residues 318 to 338 traverse the membrane as a helical segment; it reads SLSFSYILQLYLVVMFLGLFI. Residues 339–359 are Cytoplasmic-facing; it reads NFRHLFKQRTRRFRTKKRKAN.

It belongs to the very long-chain fatty acids dehydratase HACD family.

It is found in the endoplasmic reticulum membrane. The enzyme catalyses a very-long-chain (3R)-3-hydroxyacyl-CoA = a very-long-chain (2E)-enoyl-CoA + H2O. It catalyses the reaction (3R)-hydroxyhexadecanoyl-CoA = (2E)-hexadecenoyl-CoA + H2O. Its pathway is lipid metabolism; fatty acid biosynthesis. Catalyzes the third of the four reactions of the long-chain fatty acids elongation cycle. This endoplasmic reticulum-bound enzymatic process, allows the addition of two carbons to the chain of long- and very long-chain fatty acids/VLCFAs per cycle. This enzyme catalyzes the dehydration of the 3-hydroxyacyl-CoA intermediate into trans-2,3-enoyl-CoA, within each cycle of fatty acid elongation. Thereby, it participates in the production of VLCFAs of different chain lengths that are involved in multiple biological processes as precursors of membrane lipids and lipid mediators. Involved in Rac1-signaling pathways leading to the modulation of gene expression. In Danio rerio (Zebrafish), this protein is Very-long-chain (3R)-3-hydroxyacyl-CoA dehydratase.